Reading from the N-terminus, the 320-residue chain is Ribose-phosphate pyrophosphokinase (320 aa).

41 to 43 contacts ATP; sequence NDN. 2 residues coordinate Mg(2+): H134 and D175. K198 is a catalytic residue. The D-ribose 5-phosphate site is built by R200 and D224.

This sequence belongs to the ribose-phosphate pyrophosphokinase family. Class I subfamily. In terms of assembly, homohexamer. It depends on Mg(2+) as a cofactor.

It localises to the cytoplasm. It catalyses the reaction D-ribose 5-phosphate + ATP = 5-phospho-alpha-D-ribose 1-diphosphate + AMP + H(+). It functions in the pathway metabolic intermediate biosynthesis; 5-phospho-alpha-D-ribose 1-diphosphate biosynthesis; 5-phospho-alpha-D-ribose 1-diphosphate from D-ribose 5-phosphate (route I): step 1/1. Its function is as follows. Involved in the biosynthesis of the central metabolite phospho-alpha-D-ribosyl-1-pyrophosphate (PRPP) via the transfer of pyrophosphoryl group from ATP to 1-hydroxyl of ribose-5-phosphate (Rib-5-P). In Deinococcus radiodurans (strain ATCC 13939 / DSM 20539 / JCM 16871 / CCUG 27074 / LMG 4051 / NBRC 15346 / NCIMB 9279 / VKM B-1422 / R1), this protein is Ribose-phosphate pyrophosphokinase.